Reading from the N-terminus, the 520-residue chain is GMP synthase [glutamine-hydrolyzing] (520 aa).

Residues 9 to 202 (KILILDFGSQ…VRKICGCSGK (194 aa)) enclose the Glutamine amidotransferase type-1 domain. Cys86 (nucleophile) is an active-site residue. Catalysis depends on residues His176 and Glu178. In terms of domain architecture, GMPS ATP-PPase spans 203-395 (WTPGQIIEDA…LGLPHQMVWR (193 aa)). 230–236 (SGGVDSS) contributes to the ATP binding site.

Homodimer.

The catalysed reaction is XMP + L-glutamine + ATP + H2O = GMP + L-glutamate + AMP + diphosphate + 2 H(+). It functions in the pathway purine metabolism; GMP biosynthesis; GMP from XMP (L-Gln route): step 1/1. Its function is as follows. Catalyzes the synthesis of GMP from XMP. This chain is GMP synthase [glutamine-hydrolyzing], found in Geotalea daltonii (strain DSM 22248 / JCM 15807 / FRC-32) (Geobacter daltonii).